Here is a 247-residue protein sequence, read N- to C-terminus: UPF0259 membrane protein BUsg_265 (247 aa).

Helical transmembrane passes span 20 to 40 (IKII…INVL), 82 to 102 (IFKI…IITL), 114 to 134 (IQFS…LNFI), 137 to 157 (FFIQ…SVLL), 188 to 208 (IVGT…TVFS), and 217 to 237 (FIFL…IVYL).

This sequence belongs to the UPF0259 family.

Its subcellular location is the cell membrane. This chain is UPF0259 membrane protein BUsg_265, found in Buchnera aphidicola subsp. Schizaphis graminum (strain Sg).